A 146-amino-acid chain; its full sequence is Protein archease (146 aa).

Ca(2+) contacts are provided by Asp-16, Asp-145, and Ile-146.

The protein belongs to the archease family.

Functionally, activates the tRNA-splicing ligase complex by facilitating the enzymatic turnover of catalytic subunit RtcB. Acts by promoting the guanylylation of RtcB, a key intermediate step in tRNA ligation. Can also alter the NTP specificity of RtcB such that ATP, dGTP or ITP is used efficiently. The protein is Protein archease of Methanosarcina acetivorans (strain ATCC 35395 / DSM 2834 / JCM 12185 / C2A).